The following is a 310-amino-acid chain: Bacteriochlorophyll synthase 34 kDa chain (310 aa).

Residues 1–13 (MSDMSDQTRLSSP) show a composition bias toward polar residues. The interval 1-20 (MSDMSDQTRLSSPPSLPLHK) is disordered. The next 8 membrane-spanning stretches (helical) occupy residues 39 to 59 (VTWFAPTWAFMCGAIASGALG), 67 to 87 (LLLGMFMAGPILCGLSQVVND), 112 to 132 (HVYILTAVLTWIGASIALFLG), 134 to 154 (QVAFFVALGLVFALAYSLRPI), 166 to 186 (LVAISYEGLAWMAGHAAFAPL), 187 to 207 (TGESVTIALLYSLGAHGIMTV), 248 to 268 (VIGLLFHWGHPVAATVVAILL), and 287 to 307 (VFFNATAIMLYVWGMLAAAIG).

Its subcellular location is the cell membrane. The protein operates within porphyrin-containing compound metabolism; bacteriochlorophyll biosynthesis (light-independent). In terms of biological role, catalyzes the esterification of bacteriochlorophyllide a by geranylgeraniol-PPi. In Chloroflexus aurantiacus (strain ATCC 29366 / DSM 635 / J-10-fl), this protein is Bacteriochlorophyll synthase 34 kDa chain (bchG).